The sequence spans 122 residues: Large ribosomal subunit protein uL14c (122 aa).

The protein belongs to the universal ribosomal protein uL14 family. Part of the 50S ribosomal subunit.

The protein localises to the plastid. It localises to the chloroplast. Binds to 23S rRNA. In Amborella trichopoda, this protein is Large ribosomal subunit protein uL14c.